A 94-amino-acid chain; its full sequence is YcgL domain-containing protein VP0875 (94 aa).

The YcgL domain occupies 1-84 (MLCSIYKSSK…PPENLLEKYK (84 aa)).

This is YcgL domain-containing protein VP0875 from Vibrio parahaemolyticus serotype O3:K6 (strain RIMD 2210633).